The chain runs to 231 residues: Ion-translocating oxidoreductase complex subunit E (231 aa).

The next 6 helical transmembrane spans lie at 18 to 38 (ALVQ…ATNA), 39 to 59 (LGLG…ISTL), 63 to 83 (TPSE…VSAV), 86 to 106 (LINA…PLIV), 125 to 145 (ALSA…MFVL), and 182 to 202 (PFLL…MLAG).

It belongs to the NqrDE/RnfAE family. The complex is composed of six subunits: RsxA, RsxB, RsxC, RsxD, RsxE and RsxG.

The protein resides in the cell inner membrane. In terms of biological role, part of a membrane-bound complex that couples electron transfer with translocation of ions across the membrane. Required to maintain the reduced state of SoxR. This Escherichia coli O6:K15:H31 (strain 536 / UPEC) protein is Ion-translocating oxidoreductase complex subunit E.